Reading from the N-terminus, the 716-residue chain is MIAKKEKNKTPKDSMTLLPCFYFVELPIVASSVVSLYFLELTDLFQPAKVGFQCHDRSLSMPYVETNEELIPLLMLLSLAFAAPAASIMVGEGMVYCLQSRLWGRGPGGVEGSINAGGCNFNSFLRRTVRFVGVHVFGLCATALVTDVIQLATGYHTPFFLTVCKPNYTLLGTSCEANPYITQDICSGHDTHAILSARKTFPSQHATLSAFAAVYVSMYFNSVISDATKLLKPILVFAFAIAAGVCGLTQITQYRSHPVDVYAGFLIGAGIAAYLACHAVGNFQAPPAEKVPTPAPAKDALRVLTQRGHESMYQQNKSVSTDELGPPGRLEGVPRPVAREKTSLGSLKRASVDVDLLAPRSPMGKEGMVTFSNTLPRVSTPSLDDPSRRHMTIHVPLDASRSRQLISEWKQKSLEGRGLGLPDEASPAHLRAPAEQVAEEEEEEEEEEEEEEEEEEEEEGPVPPSLYPTVQARPGLGPRVILPPRPGPQPLIHIPEEVVQAGAGLSPKSSASVRAKWLSMVEKGGGPVAVAPPQPRVANPPRLLQVIAMSKAAGGPKAETASSSSASSDSSQYRSPSDRDSASIVTIDAHAPHHPVVHLSAGSTPWEWKAKVVEGEGGYELGDLARGFRSSCKQPGIGPGSPVSDVDQEEPRFGAVATVNLATGEGLPPPGASEGALGAGSRESTLRRQVGALGEREVEAEAESYYRRMQARRYQD.

3 consecutive transmembrane segments (helical) span residues 18–38 (LPCF…SLYF), 70–90 (LIPL…SIMV), and 131–151 (FVGV…VIQL). N-linked (GlcNAc...) asparagine glycosylation is present at Asn-167. Transmembrane regions (helical) follow at residues 205–225 (HATL…SVIS), 231–251 (LKPI…LTQI), and 261–281 (VYAG…HAVG). A disordered region spans residues 311-334 (SMYQQNKSVSTDELGPPGRLEGVP). The segment covering 312-321 (MYQQNKSVST) has biased composition (polar residues). A glycan (N-linked (GlcNAc...) asparagine) is linked at Asn-316. Phosphoserine occurs at positions 320 and 351. Residue Thr-374 is modified to Phosphothreonine. Residues 416–488 (GRGLGLPDEA…RVILPPRPGP (73 aa)) form a disordered region. At Ser-426 the chain carries Phosphoserine. Residues 437–460 (VAEEEEEEEEEEEEEEEEEEEEEG) are compositionally biased toward acidic residues. Ser-506 carries the post-translational modification Phosphoserine. A disordered region spans residues 548 to 589 (AMSKAAGGPKAETASSSSASSDSSQYRSPSDRDSASIVTIDA). The span at 562 to 575 (SSSSASSDSSQYRS) shows a compositional bias: low complexity. Phosphoserine is present on Ser-641. The interval 664–694 (GEGLPPPGASEGALGAGSRESTLRRQVGALG) is disordered.

Belongs to the PA-phosphatase related phosphoesterase family.

The protein localises to the membrane. This chain is Phospholipid phosphatase-related protein type 3, found in Rattus norvegicus (Rat).